The primary structure comprises 381 residues: tRNA pseudouridine synthase D (381 aa).

Catalysis depends on D81, which acts as the Nucleophile. Residues 160-335 (GMPNYFGSQR…TLGSRRFFWV (176 aa)) enclose the TRUD domain.

This sequence belongs to the pseudouridine synthase TruD family.

The enzyme catalyses uridine(13) in tRNA = pseudouridine(13) in tRNA. Functionally, responsible for synthesis of pseudouridine from uracil-13 in transfer RNAs. In Helicobacter pylori (strain P12), this protein is tRNA pseudouridine synthase D.